We begin with the raw amino-acid sequence, 347 residues long: Phosphoribosylformylglycinamidine cyclo-ligase (347 aa).

It belongs to the AIR synthase family.

The protein localises to the cytoplasm. It carries out the reaction 2-formamido-N(1)-(5-O-phospho-beta-D-ribosyl)acetamidine + ATP = 5-amino-1-(5-phospho-beta-D-ribosyl)imidazole + ADP + phosphate + H(+). It participates in purine metabolism; IMP biosynthesis via de novo pathway; 5-amino-1-(5-phospho-D-ribosyl)imidazole from N(2)-formyl-N(1)-(5-phospho-D-ribosyl)glycinamide: step 2/2. The chain is Phosphoribosylformylglycinamidine cyclo-ligase from Dechloromonas aromatica (strain RCB).